The primary structure comprises 618 residues: MALLQISEPGQAPDPHQRRIAVGIDLGTTHSLVAAVRNGVAECLPDDQGRVILPSAVRYLDRERRQIGFDALAARAQDAANTITSVKRLMGRGLADIANRESMSYRLVDEGGMVKVETAAGIKSPVEISAEILATLRYRAEDTFDGELYGAVITVPAYFDEGQRQATKDAAQLAGLNVLRLISEPTAAAIAYGLDNASEGVYAVYDLGGGTFDISILRLTQGVFEVIATGGDSALGGDDYDHALADFVLAQTGLQVGSDADKAAVLVAARAAKEALTDADSVAFHAKLAGGAARFDLARAQFDAATKPLTDRTIAAVRKALRDAKLKPDDLQGIVLVGGSTRMPQIRRAVAEFFGREPLVNLNPDEVVALGAAIQANQLAGNNGAGDLLLLDVIPLSLGIETMGGLVERIVPRNQTIPTAMAQDFTTYQDGQTALALHVVQGERDLVADCRSLARFTLRGIPPMAAGAARIRVTFTVDADGLLSVSAKEQGSGVEASVAVKPSYGLSDDQIATMLQESFSTAQQDMQARALVEARVDAERMLLATQSALDADGDLLGEEERAVIDASMAKLREAAKGNDAAAIEGATKALANDTEAFAAQRMNAGIARALSGRKLESL.

This sequence belongs to the heat shock protein 70 family.

In terms of biological role, chaperone involved in the maturation of iron-sulfur cluster-containing proteins. Has a low intrinsic ATPase activity which is markedly stimulated by HscB. This is Chaperone protein HscA homolog from Variovorax paradoxus (strain S110).